The chain runs to 400 residues: Lysophospholipid transporter LplT (400 aa).

11 consecutive transmembrane segments (helical) span residues 19-39 (VIVAQFLSAFGDNALLFATLA), 53-73 (VLQMVFVGAYILFAPFVGQIA), 91-111 (AGAAGICLGVNPFVGYTLVGI), 139-159 (LMEASTIAAILLGSVAGGVLA), 164-184 (IAALVACALAYAGAVAANLFI), 227-247 (LFWGAGVTLRFLLVLWVPVAL), 257-277 (YLNAMVAVGIVVGAGAAAKLV), 281-301 (TVSRCMPAGILIGVVVAIFSL), 304-324 (ALLPAYALLLLIGMLGGFFVV), 352-372 (NSAMLLMLGLYSLAVLVGVPA), and 373-393 (VAIGIGFGVLFALAIAALWIW).

Belongs to the major facilitator superfamily. LplT (TC 2.A.1.42) family.

The protein localises to the cell inner membrane. Functionally, catalyzes the facilitated diffusion of 2-acyl-glycero-3-phosphoethanolamine (2-acyl-GPE) into the cell. The protein is Lysophospholipid transporter LplT of Salmonella gallinarum (strain 287/91 / NCTC 13346).